A 491-amino-acid polypeptide reads, in one-letter code: Aspartyl/glutamyl-tRNA(Asn/Gln) amidotransferase subunit B (491 aa).

It belongs to the GatB/GatE family. GatB subfamily. As to quaternary structure, heterotrimer of A, B and C subunits.

It catalyses the reaction L-glutamyl-tRNA(Gln) + L-glutamine + ATP + H2O = L-glutaminyl-tRNA(Gln) + L-glutamate + ADP + phosphate + H(+). The catalysed reaction is L-aspartyl-tRNA(Asn) + L-glutamine + ATP + H2O = L-asparaginyl-tRNA(Asn) + L-glutamate + ADP + phosphate + 2 H(+). Its function is as follows. Allows the formation of correctly charged Asn-tRNA(Asn) or Gln-tRNA(Gln) through the transamidation of misacylated Asp-tRNA(Asn) or Glu-tRNA(Gln) in organisms which lack either or both of asparaginyl-tRNA or glutaminyl-tRNA synthetases. The reaction takes place in the presence of glutamine and ATP through an activated phospho-Asp-tRNA(Asn) or phospho-Glu-tRNA(Gln). This chain is Aspartyl/glutamyl-tRNA(Asn/Gln) amidotransferase subunit B, found in Parasynechococcus marenigrum (strain WH8102).